The primary structure comprises 87 residues: Conotoxin Ca6.2 (87 aa).

The signal sequence occupies residues 1 to 19; that stretch reads MHTLEMLLLVLLLVPLAPG. The propeptide occupies 20–52; sequence EGDGQAVGGDRNPSEARRAYKRLLQRPARRMDR. 3 cysteine pairs are disulfide-bonded: Cys-55–Cys-64, Cys-58–Cys-70, and Cys-63–Cys-84.

This sequence belongs to the conotoxin Q superfamily. In terms of tissue distribution, expressed by the venom duct.

It is found in the secreted. The sequence is that of Conotoxin Ca6.2 from Conus caracteristicus (Characteristic cone).